The sequence spans 149 residues: Large ribosomal subunit protein uL13 (149 aa).

Belongs to the universal ribosomal protein uL13 family. In terms of assembly, part of the 50S ribosomal subunit.

In terms of biological role, this protein is one of the early assembly proteins of the 50S ribosomal subunit, although it is not seen to bind rRNA by itself. It is important during the early stages of 50S assembly. In Thermotoga maritima (strain ATCC 43589 / DSM 3109 / JCM 10099 / NBRC 100826 / MSB8), this protein is Large ribosomal subunit protein uL13.